Here is a 344-residue protein sequence, read N- to C-terminus: Cathepsin B-like cysteine proteinase 5 (344 aa).

Residues 1–15 (MWKLSAILLVAAASA) form the signal peptide. The propeptide occupies 16–81 (VVIPGHREAP…DIVATEVSDA (66 aa)). 6 cysteine pairs are disulfide-bonded: C95–C124, C107–C154, C143–C213, C144–C150, C183–C217, and C191–C203. C110 is a catalytic residue. Active-site residues include H286 and N306.

The protein belongs to the peptidase C1 family.

The polypeptide is Cathepsin B-like cysteine proteinase 5 (cpr-5) (Caenorhabditis elegans).